Here is a 164-residue protein sequence, read N- to C-terminus: ATP synthase subunit b (164 aa).

A helical transmembrane segment spans residues 12 to 32 (FILVTGSVIVLLLLIKAFAWG).

The protein belongs to the ATPase B chain family. F-type ATPases have 2 components, F(1) - the catalytic core - and F(0) - the membrane proton channel. F(1) has five subunits: alpha(3), beta(3), gamma(1), delta(1), epsilon(1). F(0) has three main subunits: a(1), b(2) and c(10-14). The alpha and beta chains form an alternating ring which encloses part of the gamma chain. F(1) is attached to F(0) by a central stalk formed by the gamma and epsilon chains, while a peripheral stalk is formed by the delta and b chains.

It localises to the cell membrane. Functionally, f(1)F(0) ATP synthase produces ATP from ADP in the presence of a proton or sodium gradient. F-type ATPases consist of two structural domains, F(1) containing the extramembraneous catalytic core and F(0) containing the membrane proton channel, linked together by a central stalk and a peripheral stalk. During catalysis, ATP synthesis in the catalytic domain of F(1) is coupled via a rotary mechanism of the central stalk subunits to proton translocation. Component of the F(0) channel, it forms part of the peripheral stalk, linking F(1) to F(0). This Streptococcus equi subsp. zooepidemicus (strain MGCS10565) protein is ATP synthase subunit b.